We begin with the raw amino-acid sequence, 247 residues long: Suppressor of silencing P0 (247 aa).

One can recognise an F-box-like domain in the interval 76 to 95; sequence LPRHLHYECLEWGLLCGTHP.

This sequence belongs to the polerovirus P0 protein family.

Functionally, suppressor of RNA-mediated gene silencing, also known as post-transcriptional gene silencing (PTGS), a mechanism of plant viral defense that limits the accumulation of viral RNAs. The P0 protein suppresses local PTGS using its F-box-like domain to mediate destabilization and degradation of the AGO1 protein, although not via an interaction with host SKP1A. Participates, together with the proteins P1 and P7, in the inhibition of the induction of aphid-induced host phytohormones. This could play a role in the attraction to the infected plants by aphids. This is Suppressor of silencing P0 from Potato leafroll virus (strain Potato/Scotland/strain 1/1984) (PLrV).